The primary structure comprises 91 residues: Large ribosomal subunit protein eL43 (91 aa).

The segment at 39–60 (CSFCGKEAMKRKATGIWNCAKC) adopts a C4-type zinc-finger fold.

Belongs to the eukaryotic ribosomal protein eL43 family.

The chain is Large ribosomal subunit protein eL43 from Caenorhabditis elegans.